Here is a 220-residue protein sequence, read N- to C-terminus: Ribonuclease HII (220 aa).

One can recognise an RNase H type-2 domain in the interval 32-220 (KHIVGIDEAG…FAPIKGRYSV (189 aa)). Asp-38, Glu-39, and Asp-130 together coordinate a divalent metal cation.

This sequence belongs to the RNase HII family. It depends on Mn(2+) as a cofactor. Mg(2+) serves as cofactor.

Its subcellular location is the cytoplasm. The enzyme catalyses Endonucleolytic cleavage to 5'-phosphomonoester.. Its function is as follows. Endonuclease that specifically degrades the RNA of RNA-DNA hybrids. In Brucella anthropi (strain ATCC 49188 / DSM 6882 / CCUG 24695 / JCM 21032 / LMG 3331 / NBRC 15819 / NCTC 12168 / Alc 37) (Ochrobactrum anthropi), this protein is Ribonuclease HII.